A 259-amino-acid chain; its full sequence is 5'-nucleotidase SurE (259 aa).

A divalent metal cation is bound by residues aspartate 8, aspartate 9, serine 41, and asparagine 100.

This sequence belongs to the SurE nucleotidase family. A divalent metal cation is required as a cofactor.

The protein localises to the cytoplasm. The enzyme catalyses a ribonucleoside 5'-phosphate + H2O = a ribonucleoside + phosphate. Nucleotidase that shows phosphatase activity on nucleoside 5'-monophosphates. In Natranaerobius thermophilus (strain ATCC BAA-1301 / DSM 18059 / JW/NM-WN-LF), this protein is 5'-nucleotidase SurE.